Reading from the N-terminus, the 279-residue chain is Large ribosomal subunit protein uL2 (279 aa).

Residues 223 to 279 (MAMNPVDHPMGGGEGKSKSGGGRKHPKSPWGQLAKGLKTRNKKKASSKLIVRGRKSK) are disordered. A compositionally biased stretch (gly residues) spans 232–242 (MGGGEGKSKSG). The span at 259-279 (LKTRNKKKASSKLIVRGRKSK) shows a compositional bias: basic residues.

This sequence belongs to the universal ribosomal protein uL2 family. In terms of assembly, part of the 50S ribosomal subunit. Forms a bridge to the 30S subunit in the 70S ribosome.

Functionally, one of the primary rRNA binding proteins. Required for association of the 30S and 50S subunits to form the 70S ribosome, for tRNA binding and peptide bond formation. It has been suggested to have peptidyltransferase activity; this is somewhat controversial. Makes several contacts with the 16S rRNA in the 70S ribosome. The polypeptide is Large ribosomal subunit protein uL2 (Prosthecochloris aestuarii (strain DSM 271 / SK 413)).